Consider the following 446-residue polypeptide: Maltoporin (446 aa).

Residues 1–25 form the signal peptide; the sequence is MMITLRKLPLAVAVAAGVMSAQAMA.

It belongs to the porin LamB (TC 1.B.3) family. Homotrimer formed of three 18-stranded antiparallel beta-barrels, containing three independent channels.

The protein resides in the cell outer membrane. It catalyses the reaction beta-maltose(in) = beta-maltose(out). Functionally, involved in the transport of maltose and maltodextrins. The polypeptide is Maltoporin (Escherichia coli O6:K15:H31 (strain 536 / UPEC)).